Reading from the N-terminus, the 154-residue chain is MATFVQKPAEVEKKWILIDAEGLVVGRLASLIANRLRGKHKATYTPHVDDGDNVIVINAEKAVLTGKKYTDKKYYWHTGYPGGIKERTARQIIEGRFPERVIEKAVERMVPRGPLGRRQMKNLRVYAGSNHPHEAQQPAVLDVAKLNSKNTRSA.

The protein belongs to the universal ribosomal protein uL13 family. Part of the 50S ribosomal subunit.

In terms of biological role, this protein is one of the early assembly proteins of the 50S ribosomal subunit, although it is not seen to bind rRNA by itself. It is important during the early stages of 50S assembly. This chain is Large ribosomal subunit protein uL13, found in Rhizobium meliloti (strain 1021) (Ensifer meliloti).